A 363-amino-acid chain; its full sequence is Early boundary activity protein 1 (363 aa).

Positions 155–168 are enriched in basic and acidic residues; that stretch reads MDQEPEHKQSHEQD. The tract at residues 155-242 is disordered; it reads MDQEPEHKQS…NAKRRCPGFE (88 aa). A compositionally biased stretch (acidic residues) spans 198–209; that stretch reads EDLGLDDDDEDY. Residues 255–354 enclose the BEN domain; it reads GPNGTEVSRI…TKCADENKML (100 aa).

The heterotrimeric Elba complex consists of Elba1, Elba2 and Elba3.

Its subcellular location is the nucleus. Its function is as follows. The heterotrimeric Elba complex is required for chromatin domain boundary function during early embryogenesis. It binds to a 8-bp sequence 5'-CCAATAAG-3' in the Fab-7 insulator or boundary element in the bithorax complex and contributes to its insulator or boundary activity. Elba1 may act as a transcriptional repressor and binds the palindromic sequence 5'-CCAATTGG-3' to mediate transcriptional repression. The protein is Early boundary activity protein 1 of Drosophila melanogaster (Fruit fly).